A 419-amino-acid polypeptide reads, in one-letter code: UDP-N-acetylglucosamine 1-carboxyvinyltransferase (419 aa).

Residue 22–23 (KN) participates in phosphoenolpyruvate binding. Arginine 91 lines the UDP-N-acetyl-alpha-D-glucosamine pocket. Residue cysteine 115 is the Proton donor of the active site. 2-(S-cysteinyl)pyruvic acid O-phosphothioketal is present on cysteine 115. Residues 120–124 (RPVDL), 160–163 (KVSV), aspartate 305, and valine 327 contribute to the UDP-N-acetyl-alpha-D-glucosamine site.

It belongs to the EPSP synthase family. MurA subfamily.

It localises to the cytoplasm. It catalyses the reaction phosphoenolpyruvate + UDP-N-acetyl-alpha-D-glucosamine = UDP-N-acetyl-3-O-(1-carboxyvinyl)-alpha-D-glucosamine + phosphate. It participates in cell wall biogenesis; peptidoglycan biosynthesis. Its function is as follows. Cell wall formation. Adds enolpyruvyl to UDP-N-acetylglucosamine. The sequence is that of UDP-N-acetylglucosamine 1-carboxyvinyltransferase from Salmonella dublin (strain CT_02021853).